Here is a 524-residue protein sequence, read N- to C-terminus: 2-isopropylmalate synthase (524 aa).

The 263-residue stretch at 5 to 267 folds into the Pyruvate carboxyltransferase domain; that stretch reads VIIFDTTLRD…HTNIRHSEIH (263 aa). 4 residues coordinate Mn(2+): Asp-14, His-202, His-204, and Asn-238. The segment at 392–524 is regulatory domain; the sequence is KLEYLGVQSG…KTDKINTESV (133 aa).

Belongs to the alpha-IPM synthase/homocitrate synthase family. LeuA type 1 subfamily. In terms of assembly, homodimer. Mn(2+) is required as a cofactor.

The protein resides in the cytoplasm. It carries out the reaction 3-methyl-2-oxobutanoate + acetyl-CoA + H2O = (2S)-2-isopropylmalate + CoA + H(+). The protein operates within amino-acid biosynthesis; L-leucine biosynthesis; L-leucine from 3-methyl-2-oxobutanoate: step 1/4. Functionally, catalyzes the condensation of the acetyl group of acetyl-CoA with 3-methyl-2-oxobutanoate (2-ketoisovalerate) to form 3-carboxy-3-hydroxy-4-methylpentanoate (2-isopropylmalate). The sequence is that of 2-isopropylmalate synthase from Aeromonas hydrophila subsp. hydrophila (strain ATCC 7966 / DSM 30187 / BCRC 13018 / CCUG 14551 / JCM 1027 / KCTC 2358 / NCIMB 9240 / NCTC 8049).